The chain runs to 849 residues: Serrate RNA effector molecule homolog A (849 aa).

Disordered stretches follow at residues 1–90 and 276–409; these read MADS…HGSD and KREA…PRPL. Basic and acidic residues-rich tracts occupy residues 8 to 73, 276 to 306, and 314 to 342; these read YDRR…RHDL, KREAAKKEEAPVTETEKVVTEEKEAPAKPEN, and EKPVKPQEEEEKKVEKKVEKEEPERETRK. Residues 354 to 364 show a composition bias toward acidic residues; it reads SDDGSDSESDT. Basic and acidic residues predominate over residues 381-405; it reads RAEETPKKEEDTEKQKEKQKEDTVK.

The protein belongs to the ARS2 family. Interacts ncbp1/cbp80.

It localises to the nucleus. Its subcellular location is the nucleoplasm. The protein resides in the cytoplasm. Acts as a mediator between the cap-binding complex (CBC) and the primary microRNAs (miRNAs) processing machinery during cell proliferation. Contributes to the stability and delivery of capped primary miRNA transcripts to the primary miRNA processing complex, thereby playing a role in RNA-mediated gene silencing (RNAi) by miRNAs. The chain is Serrate RNA effector molecule homolog A (srrt-a) from Xenopus laevis (African clawed frog).